The sequence spans 274 residues: Putative HTH-type transcriptional regulator RmpR (274 aa).

Residues 18–88 (IERADAIVER…RSGGTFVVNQ (71 aa)) form the HTH gntR-type domain. Positions 46 to 65 (EAALSEMFGVGGATLREALS) form a DNA-binding region, H-T-H motif. The span at 250 to 265 (SRPSSPATAPDGSSSA) shows a compositional bias: polar residues. The segment at 250-274 (SRPSSPATAPDGSSSAEAAMIQEGQ) is disordered.

May regulate the transcription of the rmpAB operon. This Mycobacterium gastri protein is Putative HTH-type transcriptional regulator RmpR (rmpR).